A 32-amino-acid chain; its full sequence is C-reactive protein (32 aa).

Positions 2–32 (VIKTLVFQSESNNSFVELIPMKPLNLRAFXL) constitute a Pentraxin (PTX) domain.

This sequence belongs to the pentraxin family. As to quaternary structure, homopentamer. Pentraxin (or pentaxin) have a discoid arrangement of 5 non-covalently bound subunits. In terms of processing, glycosylated.

The protein localises to the secreted. Displays several functions associated with host defense: it promotes agglutination, bacterial capsular swelling, phagocytosis, and complement fixation through its calcium-dependent binding to phosphorylcholine. The polypeptide is C-reactive protein (Pleuronectes platessa (European plaice)).